The chain runs to 516 residues: D-alanine--D-alanyl carrier protein ligase (516 aa).

156–157 (TS) is an ATP binding site. Aspartate 203 lines the D-alanine pocket. 298 to 303 (NAYGPT) is a binding site for ATP. Valine 307 serves as a coordination point for D-alanine. ATP is bound by residues aspartate 389, 401-404 (YGGR), and lysine 503. Lysine 503 serves as a coordination point for D-alanine.

Belongs to the ATP-dependent AMP-binding enzyme family. DltA subfamily.

It is found in the cytoplasm. It catalyses the reaction holo-[D-alanyl-carrier protein] + D-alanine + ATP = D-alanyl-[D-alanyl-carrier protein] + AMP + diphosphate. It functions in the pathway cell wall biogenesis; lipoteichoic acid biosynthesis. Catalyzes the first step in the D-alanylation of lipoteichoic acid (LTA), the activation of D-alanine and its transfer onto the D-alanyl carrier protein (Dcp) DltC. In an ATP-dependent two-step reaction, forms a high energy D-alanyl-AMP intermediate, followed by transfer of the D-alanyl residue as a thiol ester to the phosphopantheinyl prosthetic group of the Dcp. D-alanylation of LTA plays an important role in modulating the properties of the cell wall in Gram-positive bacteria, influencing the net charge of the cell wall. The chain is D-alanine--D-alanyl carrier protein ligase from Streptococcus pneumoniae serotype 4 (strain ATCC BAA-334 / TIGR4).